A 162-amino-acid chain; its full sequence is uncharacterized protein (162 aa).

The protein belongs to the A.longa ORF167/ORF288 family.

It is found in the plastid. This is an uncharacterized protein from Euglena longa (Euglenophycean alga).